Reading from the N-terminus, the 78-residue chain is MPKRILQGTVVSDKNDKTVVVKVERRFAHPILQKTVRRSKKYKAHDENNQYKVGDVVSIEECAPISKDKRWTVIAAQA.

The protein belongs to the universal ribosomal protein uS17 family. As to quaternary structure, part of the 30S ribosomal subunit.

Its function is as follows. One of the primary rRNA binding proteins, it binds specifically to the 5'-end of 16S ribosomal RNA. This chain is Small ribosomal subunit protein uS17, found in Sinorhizobium fredii (strain NBRC 101917 / NGR234).